Consider the following 134-residue polypeptide: Mediator of RNA polymerase II transcription subunit 10 (134 aa).

The protein belongs to the Mediator complex subunit 10 family. As to quaternary structure, component of the Mediator complex.

Its subcellular location is the nucleus. Its function is as follows. Component of the Mediator complex, a coactivator involved in the regulated transcription of nearly all RNA polymerase II-dependent genes. Mediator functions as a bridge to convey information from gene-specific regulatory proteins to the basal RNA polymerase II transcription machinery. Mediator is recruited to promoters by direct interactions with regulatory proteins and serves as a scaffold for the assembly of a functional preinitiation complex with RNA polymerase II and the general transcription factors. Negatively regulates the Wnt signaling pathway and positively regulates the Nodal signaling pathway. Required for cardiac cushion formation. The polypeptide is Mediator of RNA polymerase II transcription subunit 10 (med10) (Danio rerio (Zebrafish)).